Here is an 86-residue protein sequence, read N- to C-terminus: Small ribosomal subunit protein bS16 (86 aa).

This sequence belongs to the bacterial ribosomal protein bS16 family.

In Methylacidiphilum infernorum (isolate V4) (Methylokorus infernorum (strain V4)), this protein is Small ribosomal subunit protein bS16.